A 117-amino-acid chain; its full sequence is Large ribosomal subunit protein uL18 (117 aa).

The protein belongs to the universal ribosomal protein uL18 family. Part of the 50S ribosomal subunit; part of the 5S rRNA/L5/L18/L25 subcomplex. Contacts the 5S and 23S rRNAs.

This is one of the proteins that bind and probably mediate the attachment of the 5S RNA into the large ribosomal subunit, where it forms part of the central protuberance. In Blochmanniella pennsylvanica (strain BPEN), this protein is Large ribosomal subunit protein uL18.